Here is a 358-residue protein sequence, read N- to C-terminus: Protein PXR1 (358 aa).

Disordered stretches follow at residues 1–26 (MGLA…NNTS) and 146–342 (EVKT…KSAT). Polar residues predominate over residues 11-26 (KISNDPQNTTWANNTS). Residues 25–79 (TSRFGHRILTSQGWQPGDSLGASDAAHAAHYTVASQSHIRVLLKDDNLGLGAKRG) enclose the G-patch domain. Composition is skewed to basic and acidic residues over residues 146 to 171 (EVKT…EDDR) and 199 to 217 (SMDL…SSKD). The segment covering 218-227 (KKGKKSKKDK) has biased composition (basic residues). The segment covering 287 to 299 (DVEDLSSESEDES) has biased composition (acidic residues). Residues 300 to 315 (TPSASRPATGTSTPTV) are compositionally biased toward polar residues. Over residues 328-339 (HSVRQKWIRSKK) the composition is skewed to basic residues.

It belongs to the PINX1 family.

Its subcellular location is the nucleus. It is found in the nucleolus. In terms of biological role, involved in rRNA-processing at A0, A1 and A2 sites and negatively regulates telomerase. The chain is Protein PXR1 (PXR1) from Phaeosphaeria nodorum (strain SN15 / ATCC MYA-4574 / FGSC 10173) (Glume blotch fungus).